The sequence spans 496 residues: MAWALKLPLADEVIESGLVQDFDASLSGIGQELGAGAYSMSDVLALPIFKQEESSLPPENENKILPFQYVLCAATSPAVKLHDETLTYLNQGQSYEIRMLDNRKIGELPEINGKLVKSIFRVVFHDRRLQYTEHQQLEGWRWNRPGDRILDIDIPMSVGIIDPRANPTQLNTVEFLWDPSKRTSVFIQVHCISTEFTMRKHGGEKGVPFRVQIDTFKENENGEYTEHLHSASCQIKVFKPKGADRKQKTDREKMEKRTPHEKEKYQPSYETTILTECSPWPEITYVNNAPSPGFNSSHSSFSIGEGNGSPNHQPEPPPPIADNLLPTSTPQEAQQWLHRNRFSTFSRLFRNFSGADLLKLTREDVIQICGPADGIRLFNALKGRMVRPRLTIYVCQESQQLQELQQKHEDGDAVTSTFFVYHAIYLEELTAVELTEKLAQLFSISSQQISQIYKQGPTGIHVLISDEMIQNFQDESCFVLDTMKAETNDSYHIILK.

The region spanning 61–300 is the Grh/CP2 DB domain; it reads ENKILPFQYV…SPGFNSSHSS (240 aa). The interval 133–386 is DNA-binding; the sequence is EHQQLEGWRW…LFNALKGRMV (254 aa). Disordered stretches follow at residues 238–268 and 296–327; these read FKPK…YQPS and SSHS…LLPT. The span at 241 to 265 shows a compositional bias: basic and acidic residues; sequence KGADRKQKTDREKMEKRTPHEKEKY.

It belongs to the grh/CP2 family. CP2 subfamily. As to quaternary structure, component of the SSP (stage selector protein) complex, which appears to be a heteromer of TFCP2 and 2 copies of NFE4. In terms of tissue distribution, expressed in the epiblast at the pre-primitive streak stage. At the primitive streak stage, expressed in the extending primitive streak and in the prospective neural plate. At stages 7 and 8, expressed in the neural folds, somites and in the regressing primitive streak. At stage 12, ubiquitously expressed in the whole embryo.

It is found in the nucleus. In terms of biological role, binds the B-response element 5'-CAAGTCCAGGCAAGT-3' of the ENS1/ERNI promoter. May be the major transcription activator thus being essential for its expression. In Gallus gallus (Chicken), this protein is Transcription factor CP2 (TFCP2).